Here is a 120-residue protein sequence, read N- to C-terminus: Small ribosomal subunit protein eS25 (120 aa).

The disordered stretch occupies residues 1 to 32; that stretch reads MPPKAGQTKKAKMEAANKGAKKTTKKWSKGQS. Residues 19-28 show a composition bias toward basic residues; sequence GAKKTTKKWS.

This sequence belongs to the eukaryotic ribosomal protein eS25 family.

This Leishmania infantum protein is Small ribosomal subunit protein eS25 (RPS25).